Here is a 244-residue protein sequence, read N- to C-terminus: Tetraspanin-7 (244 aa).

Topologically, residues 1 to 11 are cytoplasmic; sequence METKPVITCLK. The chain crosses the membrane as a helical span at residues 12 to 35; the sequence is TLLIIYSFVFWITGVILLAVGVWG. Over 36 to 51 the chain is Extracellular; it reads KLTLGTYISLIAENST. A glycan (N-linked (GlcNAc...) asparagine) is linked at Asn49. The helical transmembrane segment at 52–70 threads the bilayer; sequence NAPYVLIGTGTTIVVFGLF. The Cytoplasmic portion of the chain corresponds to 71 to 81; it reads GCFATCRGSPW. The helical transmembrane segment at 82–107 threads the bilayer; the sequence is MLKLYAMFLSLVFLAELVAGISGFVF. At 108–208 the chain is on the extracellular side; the sequence is RHEIKDTFLR…LVTSFMETNM (101 aa). N-linked (GlcNAc...) asparagine glycans are attached at residues Asn150, Asn153, Asn172, and Asn183. A helical membrane pass occupies residues 209-229; it reads GIIAGVAFGIAFSQLIGMLLA. Topologically, residues 230–244 are cytoplasmic; it reads CCLSRFITANQYEMV.

The protein belongs to the tetraspanin (TM4SF) family.

Its subcellular location is the membrane. Its function is as follows. May be involved in cell proliferation and cell motility. This is Tetraspanin-7 (TSPAN7) from Pongo pygmaeus (Bornean orangutan).